Reading from the N-terminus, the 129-residue chain is uncharacterized protein (129 aa).

A helical membrane pass occupies residues 103 to 125 (AISSAFQYGLSTSNFFFIFLYIF).

It localises to the membrane. This is an uncharacterized protein from Acanthamoeba polyphaga (Amoeba).